We begin with the raw amino-acid sequence, 455 residues long: N(5)-hydroxyornithine:cis-anhydromevalonyl coenzyme A-N(5)-transacylase SIDF (455 aa).

Positions 453–455 match the PTS1-type peroxisomal targeting signal motif; it reads PKL.

Belongs to the lysine N-acyltransferase mbtK family.

Its subcellular location is the peroxisome. It participates in siderophore biosynthesis. Hydroxyornithine transacylase; part of the gene cluster that mediates the biosynthesis of at least 11 siderophores, including beauverichelin A, dimerumic acid (DA), Na-dimethyl coprogen (NADC), eleutherazine B, ferricrocin (FC), fusarinine A, fusarinine C (FsC), metachelin A, mevalonolactone, rhodotorulic acid (RA) and tenellin. This cocktail of siderophores for iron metabolism is essential for virulence, and more specifically for the fungal virulence in penetrating through the host cuticle. Siderophore synthesis is also involved in conidial germination under iron-deficient conditions. For biosynthesis of fusarinine C, the transacylase SIDF transfers anhydromevalonyl to N(5)-hydroxyornithine. The required anhydromevalonyl-CoA moiety is derived from mevalonate by CoA ligation and dehydration catalyzed by SIDI and sidH respectively. The sequence is that of N(5)-hydroxyornithine:cis-anhydromevalonyl coenzyme A-N(5)-transacylase SIDF from Beauveria bassiana (strain ARSEF 2860) (White muscardine disease fungus).